Here is a 247-residue protein sequence, read N- to C-terminus: Small ribosomal subunit protein uS2 (247 aa).

This sequence belongs to the universal ribosomal protein uS2 family.

This Ectopseudomonas mendocina (strain ymp) (Pseudomonas mendocina) protein is Small ribosomal subunit protein uS2.